The chain runs to 320 residues: Ferrochelatase (320 aa).

The Fe cation site is built by His-194 and Glu-275.

The protein belongs to the ferrochelatase family.

It localises to the cytoplasm. It catalyses the reaction heme b + 2 H(+) = protoporphyrin IX + Fe(2+). It participates in porphyrin-containing compound metabolism; protoheme biosynthesis; protoheme from protoporphyrin-IX: step 1/1. Catalyzes the ferrous insertion into protoporphyrin IX. This Xylella fastidiosa (strain M23) protein is Ferrochelatase.